We begin with the raw amino-acid sequence, 1317 residues long: WASH complex subunit 2 (1317 aa).

The sufficient for interaction with WASHC3, WASHC4 and WASHC5; required for interaction with WASHC1 stretch occupies residues 1–219; that stretch reads MNRTSPDSER…VGSDRGSIVD (219 aa). S157, S159, S204, S205, and S209 each carry phosphoserine. Positions 201 to 213 are enriched in low complexity; it reads GELSSEEGSVGSD. A disordered region spans residues 201–630; sequence GELSSEEGSV…RKSKGELWDS (430 aa). Acidic residues-rich tracts occupy residues 219–232 and 250–274; these read DSEEEKEEEESDED and DEEEDDDGDLFADSEKEGDDIEDIE. S284 is modified (phosphoserine). Basic and acidic residues-rich tracts occupy residues 289–325 and 366–376; these read LAARIKGDMSNQLKEEQIADGKPQKTMKEKKEKRTPP and DLFRETSRDRP. T323 carries the post-translational modification Phosphothreonine. Residues 348 to 582 form a sufficient for interaction with CCDC93 region; sequence SRGGLFSGQG…QVSSQQPQSQ (235 aa). The segment at 349-1317 is interaction with VPS35; the sequence is RGGLFSGQGL…DDPLNAFGSQ (969 aa). Positions 358 to 368 match the LFa 1 motif; that stretch reads LFDDEDESDLF. The segment covering 379 to 399 has biased composition (low complexity); that stretch reads APVSEESSSPKPGKKIPAGAV. Phosphoserine occurs at positions 385 and 387. 2 consecutive short sequence motifs (LFa) follow at residues 433–445 and 464–473; these read LFDDNDDDDDNFF and IFDDEEGDLF. Residues 500–518 show a composition bias toward polar residues; sequence TLPSSKNPKLVSETKTQKG. 2 consecutive short sequence motifs (LFa) follow at residues 519–530 and 554–565; these read LFSDEEDSEDLF and LFGDEDEEDNLF. S521 and S526 each carry phosphoserine. Over residues 529-548 the composition is skewed to low complexity; the sequence is LFSSQNSSKSKSASLLSSQL. A compositionally biased stretch (low complexity) spans 569–582; sequence PAKKQVSSQQPQSQ. Residues 583-592 are compositionally biased toward basic and acidic residues; the sequence is EKPKPSEQPK. An LFa 6 motif is present at residues 599–611; the sequence is LFSSDEEDQWNIT. A phosphoserine mark is found at S601 and S602. Residues 613–627 show a composition bias toward basic and acidic residues; that stretch reads SHTKLATDRKSKGEL. Short sequence motifs (LFa) lie at residues 646 to 657 and 673 to 685; these read LFEEDDDEADLF and LFEDDDDSGSSLF. The interval 667–817 is disordered; the sequence is TQRTSLLFED…GRPKSTGVFQ (151 aa). S710 is subject to Phosphoserine. Basic and acidic residues predominate over residues 717-744; it reads VPSRVKSVDVKVGNGKEADVAKVTEKEG. Residues S763 and S778 each carry the phosphoserine modification. Basic and acidic residues predominate over residues 788–810; it reads EDQSNTHVSKNDAEKGLKTDGRP. 2 consecutive short sequence motifs (LFa) follow at residues 815 to 823 and 832 to 838; these read VFQDEELLF and DPDVDLF. S853 is modified (phosphoserine). Positions 854–864 match the LFa 11 motif; sequence LFGDDEDYDLF. 2 disordered regions span residues 867–926 and 960–1079; these read AKTQ…REPS and ELAF…AAPP. Over residues 874–906 the composition is skewed to basic and acidic residues; that stretch reads PEKKGALKKDRPVSLKNEEAPESTEGSKEKSLW. Residues 912-1317 are interaction with phospholipids; it reads QDSSGLTPFK…DDPLNAFGSQ (406 aa). Positions 1003–1021 are enriched in basic residues; it reads NKSRVKVRGKRRPQTRAAR. The required for interaction with F-actin-capping protein subunit alpha (CAPZA1 or CAPZA2 or CAPZA3) stretch occupies residues 1004 to 1022; it reads KSRVKVRGKRRPQTRAARR. Phosphoserine occurs at positions 1029, 1047, 1064, and 1092. Positions 1107–1114 match the LFa 12 motif; that stretch reads LFDSGDIF. Residues 1119 to 1141 form a disordered region; it reads GSQSMEGTKVKAAETPAHLSGGS. 6 consecutive short sequence motifs (LFa) follow at residues 1147–1161, 1177–1185, 1210–1216, 1238–1246, 1266–1275, and 1306–1314; these read VFPALSEASSTDDLF, LLEDEDDLF, IFEDDIF, LFDDNIDIF, VFDDDTDDIF, and IFDDPLNAF. Residues S1152, S1155, and S1156 each carry the phosphoserine modification. Residues 1158–1183 are disordered; that stretch reads DDLFQTVKPRPAKKRNPFPLLEDEDD. The disordered stretch occupies residues 1277–1317; the sequence is SGLQAKKSKPKSQSAEATSELRSDHKVSNIFDDPLNAFGSQ. Phosphoserine is present on S1316.

Belongs to the FAM21 family. Component of the WASH core complex also described as WASH regulatory complex SHRC composed of WASHC1, WASHC2, WASHC3, WASHC4 and WASHC5; in the complex interacts (via N-terminus) directly with WASHC1. The WASH core complex associates via WASHC2 with the F-actin-capping protein dimer (formed by CAPZA1, CAPZA2 or CAPZA3 and CAPZB) in a transient or substoichiometric manner which was initially described as WASH complex. Interacts with VPS35; mediates the association with the retromer CSC complex. Interacts with FKBP15. Interacts with CCDC93, CCDC22, C16orf62 homolog; indicative for an association of the WASH core complex with the CCC complex. Directly interacts with TBC1D23.

Its subcellular location is the early endosome membrane. The protein resides in the cell membrane. Its function is as follows. Acts as a component of the WASH core complex that functions as a nucleation-promoting factor (NPF) at the surface of endosomes, where it recruits and activates the Arp2/3 complex to induce actin polymerization, playing a key role in the fission of tubules that serve as transport intermediates during endosome sorting. Mediates the recruitment of the WASH core complex to endosome membranes via binding to phospholipids and VPS35 of the retromer CSC. Mediates the recruitment of the F-actin-capping protein dimer to the WASH core complex probably promoting localized F-actin polymerization needed for vesicle scission. Via its C-terminus binds various phospholipids, most strongly phosphatidylinositol 4-phosphate (PtdIns-(4)P), phosphatidylinositol 5-phosphate (PtdIns-(5)P) and phosphatidylinositol 3,5-bisphosphate (PtdIns-(3,5)P2). Involved in the endosome-to-plasma membrane trafficking and recycling of SNX27-retromer-dependent cargo proteins, such as GLUT1. Required for the association of DNAJC13, ENTR1, ANKRD50 with retromer CSC subunit VPS35. Required for the endosomal recruitment of CCC complex subunits COMMD1, CCDC93 and C16orf62 homolog. This is WASH complex subunit 2 from Cricetulus griseus (Chinese hamster).